The sequence spans 193 residues: dCTP deaminase (193 aa).

Residues Arg-110–Arg-115, Asp-128, Val-136–Glu-138, Tyr-171, Lys-178, and Gln-182 contribute to the dCTP site. The Proton donor/acceptor role is filled by Glu-138. The segment at Arg-169–Asp-193 is disordered.

This sequence belongs to the dCTP deaminase family. As to quaternary structure, homotrimer.

It catalyses the reaction dCTP + H2O + H(+) = dUTP + NH4(+). It participates in pyrimidine metabolism; dUMP biosynthesis; dUMP from dCTP (dUTP route): step 1/2. Functionally, catalyzes the deamination of dCTP to dUTP. The protein is dCTP deaminase of Citrobacter koseri (strain ATCC BAA-895 / CDC 4225-83 / SGSC4696).